Consider the following 451-residue polypeptide: ADP-specific phosphofructokinase (451 aa).

An ADPK domain is found at 1-450 (MSVPQDVSIF…FITYVNYLKR (450 aa)). Mg(2+) is bound by residues glutamate 261, glutamate 291, and aspartate 434. The Proton acceptor role is filled by aspartate 434.

This sequence belongs to the carbohydrate kinase PfkC family. The cofactor is Mg(2+).

The protein localises to the cytoplasm. It carries out the reaction beta-D-fructose 6-phosphate + ADP = beta-D-fructose 1,6-bisphosphate + AMP + H(+). Its pathway is carbohydrate degradation; glycolysis. Functionally, catalyzes the phosphorylation of fructose 6-phosphate to fructose 1,6-bisphosphate using ADP as the phosphate donor. The sequence is that of ADP-specific phosphofructokinase from Pyrococcus abyssi (strain GE5 / Orsay).